A 176-amino-acid polypeptide reads, in one-letter code: Ribosome maturation factor RimM (176 aa).

Residues 93 to 172 enclose the PRC barrel domain; it reads KDEFFQFDII…EILVKGARDI (80 aa).

It belongs to the RimM family. Binds ribosomal protein uS19.

It is found in the cytoplasm. Functionally, an accessory protein needed during the final step in the assembly of 30S ribosomal subunit, possibly for assembly of the head region. Essential for efficient processing of 16S rRNA. May be needed both before and after RbfA during the maturation of 16S rRNA. It has affinity for free ribosomal 30S subunits but not for 70S ribosomes. This Campylobacter concisus (strain 13826) protein is Ribosome maturation factor RimM.